A 262-amino-acid chain; its full sequence is Merozoite surface protein 2 (262 aa).

Residues 1-20 (MKVIKTLSIINFFIFVTFNI) form the signal peptide. N-linked (GlcNAc...) asparagine glycosylation is found at N22 and N36. The segment at 44–188 (AESKPPTGTG…EQTESPELQS (145 aa)) is polymorphic region. The segment at 44 to 223 (AESKPPTGTG…DSQKECTDGN (180 aa)) is disordered. Residues 51–66 (GTGGSGSAGSGAGASA) are compositionally biased toward gly residues. Positions 67-111 (GNGANPGADAERSPSTPATPATPATTTTTTTTNDAEASTSTSSEN) are enriched in low complexity. Residues 112 to 127 (PNHKNAETNPKGKGEV) are compositionally biased toward basic and acidic residues. 2 stretches are compositionally biased toward polar residues: residues 129–155 (KPNQ…NVPP) and 162–190 (KSPT…QSAP). N139 carries N-linked (GlcNAc...) asparagine glycosylation. N-linked (GlcNAc...) asparagine glycosylation is present at N211. A disulfide bond links C219 and C227. 2 N-linked (GlcNAc...) asparagine glycosylation sites follow: N235 and N236. N236 is lipidated: GPI-anchor amidated asparagine. The propeptide at 237 to 262 (SSNIASINKFVVLISATLVLSFAIFI) is removed in mature form.

The protein localises to the cell membrane. Its function is as follows. May play a role in the merozoite attachment to the erythrocyte. The polypeptide is Merozoite surface protein 2 (Plasmodium falciparum (isolate Camp / Malaysia)).